Here is a 130-residue protein sequence, read N- to C-terminus: Phosphomevalonate dehydratase small subunit (130 aa).

Ser-62 acts as the Proton acceptor in catalysis.

It belongs to the AcnX type II small subunit family. In terms of assembly, heterodimer composed of a large subunit (PMDh-L) and a small subunit (PMDh-S).

The catalysed reaction is (R)-5-phosphomevalonate = (2E)-3-methyl-5-phosphooxypent-2-enoate + H2O. It functions in the pathway isoprenoid biosynthesis; isopentenyl diphosphate biosynthesis via mevalonate pathway. Functionally, component of a hydro-lyase that catalyzes the dehydration of mevalonate 5-phosphate (MVA5P) to form trans-anhydromevalonate 5-phosphate (tAHMP). Involved in the archaeal mevalonate (MVA) pathway, which provides fundamental precursors for isoprenoid biosynthesis, such as isopentenyl diphosphate (IPP) and dimethylallyl diphosphate (DMAPP). This is Phosphomevalonate dehydratase small subunit from Thermococcus sibiricus (strain DSM 12597 / MM 739).